The following is a 1171-amino-acid chain: Putative tricorn protease homolog 2 (1171 aa).

Positions 432 to 498 are disordered; the sequence is AGYPPDAGDE…GSPGTPATAG (67 aa). 2 stretches are compositionally biased toward low complexity: residues 444–456 and 466–498; these read AGTA…APDA and IAAG…ATAG. His-827 serves as the catalytic Charge relay system. Residues 842 to 941 are PDZ-like; it reads YQRWQGLLGA…RVAVVPLVDE (100 aa). Residue 1002–1004 coordinates substrate; that stretch reads AGG. The active-site Nucleophile is the Ser-1051. 1079-1081 lines the substrate pocket; it reads GMT. Glu-1109 serves as the catalytic Charge relay system. Residues 1149-1171 form a disordered region; that stretch reads PPATPPGYEAVPDRSRPPLPPRE. Positions 1159 to 1171 are enriched in basic and acidic residues; sequence VPDRSRPPLPPRE.

The protein belongs to the peptidase S41B family.

It localises to the cytoplasm. Degrades oligopeptides in a sequential manner. The chain is Putative tricorn protease homolog 2 (tri2) from Streptomyces coelicolor (strain ATCC BAA-471 / A3(2) / M145).